A 212-amino-acid chain; its full sequence is Large ribosomal subunit protein uL4 (212 aa).

Belongs to the universal ribosomal protein uL4 family. In terms of assembly, part of the 50S ribosomal subunit.

One of the primary rRNA binding proteins, this protein initially binds near the 5'-end of the 23S rRNA. It is important during the early stages of 50S assembly. It makes multiple contacts with different domains of the 23S rRNA in the assembled 50S subunit and ribosome. In terms of biological role, forms part of the polypeptide exit tunnel. The sequence is that of Large ribosomal subunit protein uL4 from Caulobacter vibrioides (strain ATCC 19089 / CIP 103742 / CB 15) (Caulobacter crescentus).